The primary structure comprises 60 residues: Protein translocase subunit SecE (60 aa).

Residues 37–57 (LLGFALVGGIGYLIHLGYIIL) traverse the membrane as a helical segment.

The protein belongs to the SecE/SEC61-gamma family. As to quaternary structure, component of the Sec protein translocase complex. Heterotrimer consisting of SecY (alpha), SecG (beta) and SecE (gamma) subunits. The heterotrimers can form oligomers, although 1 heterotrimer is thought to be able to translocate proteins. Interacts with the ribosome. May interact with SecDF, and other proteins may be involved.

Its subcellular location is the cell membrane. In terms of biological role, essential subunit of the Sec protein translocation channel SecYEG. Clamps together the 2 halves of SecY. May contact the channel plug during translocation. This chain is Protein translocase subunit SecE, found in Aeropyrum pernix (strain ATCC 700893 / DSM 11879 / JCM 9820 / NBRC 100138 / K1).